Reading from the N-terminus, the 165-residue chain is UPF0254 protein MmarC7_0182 (165 aa).

Belongs to the UPF0254 family.

This Methanococcus maripaludis (strain C7 / ATCC BAA-1331) protein is UPF0254 protein MmarC7_0182.